Reading from the N-terminus, the 144-residue chain is Cytochrome c3 (144 aa).

The N-terminal stretch at 1–24 is a signal peptide; the sequence is MRYLVISLFAVSLLMAGSALVGNA. Heme c contacts are provided by His51, His54, Cys59, Cys62, His63, His64, Cys76, Cys81, His82, His100, Cys108, Cys111, His112, Cys125, Cys128, and His129.

This sequence belongs to the cytochrome c family. In terms of assembly, homodimer. Heterotrimer of cytochrome c3 FDH2C and formate dehydrogenase FDH2 alpha and beta subunits that forms the FdhABC(3) complex. Post-translationally, binds 4 heme c groups per subunit.

The protein localises to the periplasm. In terms of biological role, participates in sulfate respiration coupled with phosphorylation by transferring electrons from the enzyme dehydrogenase to ferredoxin. Gamma chain of the formate dehydrogenase (FDH) that catalyzes the reversible two-electron oxidation of formate to carbon dioxide. The gamma subunit of formate dehydrogenase forms a c-type heme. The chain is Cytochrome c3 from Nitratidesulfovibrio vulgaris (strain ATCC 29579 / DSM 644 / CCUG 34227 / NCIMB 8303 / VKM B-1760 / Hildenborough) (Desulfovibrio vulgaris).